The chain runs to 548 residues: Putative F-box protein At1g33020 (548 aa).

One can recognise an F-box domain in the interval 4–53; the sequence is AENLDSIPTDLILEIFSRMSTKSIGRCRCVSKLWKSMLGHPYFTELFLTR. The tract at residues 380–404 is disordered; it reads KPISPPKQKPKPPSTETSSREDHQG. A compositionally biased stretch (pro residues) spans 382–392; it reads ISPPKQKPKPP.

This chain is Putative F-box protein At1g33020, found in Arabidopsis thaliana (Mouse-ear cress).